Here is a 431-residue protein sequence, read N- to C-terminus: uncharacterized protein (431 aa).

The next 12 helical transmembrane spans lie at 33-53, 63-83, 111-131, 143-163, 175-195, 197-217, 241-261, 273-293, 318-338, 358-378, 381-401, and 407-427; these read VARV…VIYL, FSVF…ANGL, VSGM…PLWS, VALL…LGML, LMVA…VIGW, LVGF…MLMT, AHSI…PVLL, GVVI…LTAM, LIGG…PWIM, AAAV…AAAL, AYSL…LLPL, and TVVA…VALA.

The protein to M.tuberculosis Rv1510 and M.bovis Mb3654.

Its subcellular location is the cell membrane. This is an uncharacterized protein from Mycobacterium tuberculosis (strain ATCC 25618 / H37Rv).